We begin with the raw amino-acid sequence, 469 residues long: Properdin (469 aa).

The first 27 residues, 1-27 (MITEGAQAPRLLLPPLLLLLTLPATGS), serve as a signal peptide directing secretion. TSP type-1 domains lie at 28–76 (DPVL…QPCR), 77–134 (SPRW…QCCP), 136–191 (MGGW…QVCP), 193–255 (HGAW…PPCP), 257–313 (AGGW…VPCP), 315–377 (DGEW…QHCP), and 379–462 (KGSW…PACK). 3 disulfide bridges follow: cysteine 32-cysteine 56, cysteine 43-cysteine 72, and cysteine 57-cysteine 75. 2 C-linked (Man) tryptophan glycosylation sites follow: tryptophan 83 and tryptophan 86. Disulfide bonds link cysteine 89–cysteine 127, cysteine 93–cysteine 133, cysteine 104–cysteine 111, cysteine 132–cysteine 170, cysteine 148–cysteine 184, cysteine 152–cysteine 190, and cysteine 163–cysteine 174. O-linked (Fuc...) threonine glycosylation occurs at threonine 92. C-linked (Man) tryptophan glycosylation is found at tryptophan 139, tryptophan 142, and tryptophan 145. A glycan (O-linked (Fuc...) threonine) is linked at threonine 151. C-linked (Man) tryptophan glycans are attached at residues tryptophan 196, tryptophan 199, and tryptophan 202. 3 cysteine pairs are disulfide-bonded: cysteine 205–cysteine 248, cysteine 209–cysteine 254, and cysteine 224–cysteine 238. Serine 208 carries O-linked (Fuc...) serine glycosylation. Positions 219–238 (TRSRKCSAPEPSQKPPGKPC) are disordered. Tryptophan 260 and tryptophan 263 each carry a C-linked (Man) tryptophan glycan. Cystine bridges form between cysteine 269/cysteine 306, cysteine 273/cysteine 312, and cysteine 284/cysteine 296. The O-linked (Fuc...) threonine glycan is linked to threonine 272. Residues tryptophan 321 and tryptophan 324 are each glycosylated (C-linked (Man) tryptophan). Intrachain disulfides connect cysteine 327–cysteine 370, cysteine 337–cysteine 376, and cysteine 350–cysteine 360. Residues 351–359 (RGRKFDGHR) are interaction with Complement C3 beta chain. C-linked (Man) tryptophan glycosylation is found at tryptophan 382, tryptophan 385, and tryptophan 388. Cystine bridges form between cysteine 391/cysteine 455, cysteine 395/cysteine 461, and cysteine 407/cysteine 439. The N-linked (GlcNAc...) (complex) asparagine glycan is linked to asparagine 428.

In terms of assembly, in plasma, properdin exists as dimers, trimers or tetramers in the relative proportions of 26:54:20. Interacts with the pro-C3-convertase enzyme complex (C3b-Bb) comprised of Complement C3 beta chain (C3b) and the Complement factor B Bb fragment (Bb), where it binds (via its TSP type-1 5 domain) with C3b and Bb. This interaction stabilizes the complex and allows it to become the active C3-convertase enzyme complex (C3b-Bb-FP). Interacts with C3b. Interacts with CFB.

The protein resides in the secreted. In terms of biological role, a positive regulator of the alternate pathway (AP) of complement. It binds to and stabilizes the C3- and C5-convertase enzyme complexes. Inhibits CFI-CFH mediated degradation of Complement C3 beta chain (C3b). This Homo sapiens (Human) protein is Properdin.